The primary structure comprises 251 residues: L-ascorbate peroxidase 2, cytosolic (251 aa).

His43 (proton acceptor) is an active-site residue. Position 163 (His163) interacts with heme b. 5 residues coordinate K(+): Thr164, Thr180, Asn182, Ile185, and Asp187.

Belongs to the peroxidase family. Ascorbate peroxidase subfamily. The cofactor is heme b. In terms of tissue distribution, detected in bundle sheath cells, the photosynthetic cells that surround the phloem and xylem.

Its subcellular location is the cytoplasm. The enzyme catalyses L-ascorbate + H2O2 = L-dehydroascorbate + 2 H2O. Plays a key role in hydrogen peroxide removal. This is L-ascorbate peroxidase 2, cytosolic from Arabidopsis thaliana (Mouse-ear cress).